Here is an 81-residue protein sequence, read N- to C-terminus: U-megalopygitoxin(3)-Mo4 (81 aa).

The signal sequence occupies residues Met-1–Ala-20.

It belongs to the caterpillar 3 family. In terms of processing, contains 3 disulfide bonds. In terms of tissue distribution, expressed by the venom apparatus.

It localises to the secreted. Its function is as follows. Probable toxin. In Megalopyge opercularis (Southern flannel moth), this protein is U-megalopygitoxin(3)-Mo4.